Reading from the N-terminus, the 117-residue chain is UPF0125 protein VV0820 (117 aa).

Residues 90–117 (RKRAEQAKESGAADPVTGGKPSPLRKAD) form a disordered region.

The protein belongs to the UPF0125 (RnfH) family.

This chain is UPF0125 protein VV0820, found in Vibrio vulnificus (strain YJ016).